Here is a 639-residue protein sequence, read N- to C-terminus: UvrABC system protein C (639 aa).

The 78-residue stretch at glutamate 20 to isoleucine 97 folds into the GIY-YIG domain. A UVR domain is found at lysine 207 to valine 242.

This sequence belongs to the UvrC family. Interacts with UvrB in an incision complex.

The protein resides in the cytoplasm. The UvrABC repair system catalyzes the recognition and processing of DNA lesions. UvrC both incises the 5' and 3' sides of the lesion. The N-terminal half is responsible for the 3' incision and the C-terminal half is responsible for the 5' incision. This is UvrABC system protein C from Rickettsia rickettsii (strain Iowa).